Here is a 322-residue protein sequence, read N- to C-terminus: MLDKIWYRSKPNLLSRVLQPISLVFIDIANKRKIKQQLKQYKSKIPIIVVGNISVGGTGKTPVVRMLAQQYLAQGKKPAIISRGYGAKADNYPFEVTSGTLATQCGDEPAMLFDALQAQVPIVIAPERVQAVKYIEKNFPDTDIIISDDGLQHYKLARDKEIVVVDAIRMFGNKLCLPAGPLREPIERLKEVDQIIVIGNCSDKDKELLKNYKNVTYAKVVATEFVNILTAKKVAKTEFNHQNVIAIAGIGNPTKFFKTLEESAINITAKKVFKDHHKFTQSDFEGIDSDITVVMTYKDAIKCKNFAKANWWYLDIALDINV.

54–61 (SVGGTGKT) contributes to the ATP binding site.

Belongs to the LpxK family.

The enzyme catalyses a lipid A disaccharide + ATP = a lipid IVA + ADP + H(+). The protein operates within glycolipid biosynthesis; lipid IV(A) biosynthesis; lipid IV(A) from (3R)-3-hydroxytetradecanoyl-[acyl-carrier-protein] and UDP-N-acetyl-alpha-D-glucosamine: step 6/6. Its function is as follows. Transfers the gamma-phosphate of ATP to the 4'-position of a tetraacyldisaccharide 1-phosphate intermediate (termed DS-1-P) to form tetraacyldisaccharide 1,4'-bis-phosphate (lipid IVA). This Francisella novicida protein is Tetraacyldisaccharide 4'-kinase (lpxK).